A 432-amino-acid polypeptide reads, in one-letter code: 3-phosphoshikimate 1-carboxyvinyltransferase (432 aa).

3-phosphoshikimate is bound by residues lysine 22, serine 23, and arginine 27. Position 22 (lysine 22) interacts with phosphoenolpyruvate. Positions 96 and 127 each coordinate phosphoenolpyruvate. Residues serine 173, serine 174, glutamine 175, serine 201, aspartate 316, asparagine 339, and lysine 343 each contribute to the 3-phosphoshikimate site. Residue glutamine 175 coordinates phosphoenolpyruvate. The active-site Proton acceptor is aspartate 316. Positions 347, 391, and 416 each coordinate phosphoenolpyruvate.

This sequence belongs to the EPSP synthase family. In terms of assembly, monomer.

The protein resides in the cytoplasm. It catalyses the reaction 3-phosphoshikimate + phosphoenolpyruvate = 5-O-(1-carboxyvinyl)-3-phosphoshikimate + phosphate. It functions in the pathway metabolic intermediate biosynthesis; chorismate biosynthesis; chorismate from D-erythrose 4-phosphate and phosphoenolpyruvate: step 6/7. Its function is as follows. Catalyzes the transfer of the enolpyruvyl moiety of phosphoenolpyruvate (PEP) to the 5-hydroxyl of shikimate-3-phosphate (S3P) to produce enolpyruvyl shikimate-3-phosphate and inorganic phosphate. The sequence is that of 3-phosphoshikimate 1-carboxyvinyltransferase from Haemophilus influenzae (strain 86-028NP).